A 242-amino-acid polypeptide reads, in one-letter code: Small ribosomal subunit protein uS5 (242 aa).

Positions 1 to 14 (MADENSTGPGNQPE) are enriched in polar residues. A disordered region spans residues 1-65 (MADENSTGPG…DRRPRDEDGG (65 aa)). Basic and acidic residues predominate over residues 41–65 (DGGRGGRDGGRGRRDDRRPRDEDGG). In terms of domain architecture, S5 DRBM spans 68 to 131 (LIEKLVHINR…AAAKKAMIRV (64 aa)). The tract at residues 204–242 (EQTSPKSVAQRRGKKVSDLIKRGGASDRAAEAEAAAVTE) is disordered. A compositionally biased stretch (basic and acidic residues) spans 218-234 (KVSDLIKRGGASDRAAE).

This sequence belongs to the universal ribosomal protein uS5 family. As to quaternary structure, part of the 30S ribosomal subunit. Contacts proteins S4 and S8.

In terms of biological role, with S4 and S12 plays an important role in translational accuracy. Located at the back of the 30S subunit body where it stabilizes the conformation of the head with respect to the body. In Sphingopyxis alaskensis (strain DSM 13593 / LMG 18877 / RB2256) (Sphingomonas alaskensis), this protein is Small ribosomal subunit protein uS5.